Here is a 130-residue protein sequence, read N- to C-terminus: Small ribosomal subunit protein eS8 (130 aa).

The protein belongs to the eukaryotic ribosomal protein eS8 family. Part of the 30S ribosomal subunit.

The protein is Small ribosomal subunit protein eS8 of Thermococcus onnurineus (strain NA1).